Here is a 478-residue protein sequence, read N- to C-terminus: Probable sodium/glutamine symporter GlnT (478 aa).

10 helical membrane passes run 14–34 (DLLWSKLLIVLLLSFGIYFTF), 85–105 (IAIAIALGGPGAIFWMWIIAI), 145–165 (WMGALFAVLITLSFGIVFNSV), 185–205 (LGLILIAVFGTIIFGGVKRIA), 211–231 (IVVVLAVLYIGVAFFVIFSNI), 236–256 (GVLALIVKNAFGFDQAAGGAL), 298–318 (AFGVLTDTLVICTSTAFIILF), 342–362 (GSWASGFLAILILLFGFCALI), 381–401 (LIFVYRIGVLAMIVFGCVAKV), and 411–431 (FMGLMVIVNLIAIFLLSKVVF).

It belongs to the alanine or glycine:cation symporter (AGCS) (TC 2.A.25) family.

The protein resides in the cell membrane. Functionally, probably functions as a sodium/glutamine symporter for glutamine uptake. This chain is Probable sodium/glutamine symporter GlnT (glnT), found in Bacillus subtilis (strain 168).